A 337-amino-acid chain; its full sequence is Nucleoid-associated protein PBPRA2585 (337 aa).

This sequence belongs to the YejK family.

It is found in the cytoplasm. It localises to the nucleoid. This Photobacterium profundum (strain SS9) protein is Nucleoid-associated protein PBPRA2585.